The sequence spans 107 residues: Cell division protein FtsB (107 aa).

Over 1-3 (MGK) the chain is Cytoplasmic. The helical transmembrane segment at 4-21 (LTLLLLILLGWLQYSLWL) threads the bilayer. Residues 22 to 107 (GKNGVHDFVR…IPSTQNNAQQ (86 aa)) lie on the Periplasmic side of the membrane. Positions 39–62 (QEVNNGKLKARNDQLFAEIDDLNG) form a coiled coil.

Belongs to the FtsB family. Part of a complex composed of FtsB, FtsL and FtsQ.

The protein resides in the cell inner membrane. In terms of biological role, essential cell division protein. May link together the upstream cell division proteins, which are predominantly cytoplasmic, with the downstream cell division proteins, which are predominantly periplasmic. This Yersinia enterocolitica serotype O:8 / biotype 1B (strain NCTC 13174 / 8081) protein is Cell division protein FtsB.